A 74-amino-acid chain; its full sequence is Conotoxin VxVIA (74 aa).

The signal sequence occupies residues 1-22 (MKLTCVLIIAVLFLTAYQLATA). Positions 23-47 (ASHAKGKQKHRALRPADKHFRFTKR) are excised as a propeptide. Cystine bridges form between Cys48-Cys62, Cys55-Cys66, and Cys61-Cys73.

Expressed by the venom duct.

Its subcellular location is the secreted. When injected intracranially in mice, induces a series of symptoms such as quivering, climbing, scratching, barrel rolling and paralysis of limbs. Unexpectedly, no effect is observed on ionic currents when tested on locust DUM neuron. The protein is Conotoxin VxVIA of Conus vexillum (Flag cone).